A 129-amino-acid chain; its full sequence is Large ribosomal subunit protein bL12c (129 aa).

Belongs to the bacterial ribosomal protein bL12 family. Homodimer. Part of the ribosomal stalk of the 50S ribosomal subunit. Forms a multimeric L10(L12)X complex, where L10 forms an elongated spine to which 2 to 4 L12 dimers bind in a sequential fashion. Binds GTP-bound translation factors.

The protein resides in the plastid. Its subcellular location is the chloroplast. In terms of biological role, forms part of the ribosomal stalk which helps the ribosome interact with GTP-bound translation factors. Is thus essential for accurate translation. The chain is Large ribosomal subunit protein bL12c from Tupiella akineta (Green alga).